The primary structure comprises 324 residues: Putative GTPase PYRAB02490 (324 aa).

GTP contacts are provided by residues 52–60 (GPPGAGKST), D194, and 229–231 (VAT).

This sequence belongs to the SIMIBI class G3E GTPase family. ArgK/MeaB subfamily.

Functionally, may have GTPase activity. May also bind and hydrolyze ATP. May function as chaperone. This Pyrococcus abyssi (strain GE5 / Orsay) protein is Putative GTPase PYRAB02490.